The primary structure comprises 221 residues: Small ribosomal subunit protein uS5 (221 aa).

The S5 DRBM domain occupies 46–109 (LKDEVINIER…DNAKLNIIEI (64 aa)).

Belongs to the universal ribosomal protein uS5 family. Part of the 30S ribosomal subunit. Contacts protein S4.

Its function is as follows. With S4 and S12 plays an important role in translational accuracy. This is Small ribosomal subunit protein uS5 from Picrophilus torridus (strain ATCC 700027 / DSM 9790 / JCM 10055 / NBRC 100828 / KAW 2/3).